A 45-amino-acid polypeptide reads, in one-letter code: Peroxidase 3 (45 aa).

The protein belongs to the peroxidase family. Classical plant (class III) peroxidase subfamily. It depends on heme b as a cofactor. Ca(2+) is required as a cofactor.

It localises to the secreted. The catalysed reaction is 2 a phenolic donor + H2O2 = 2 a phenolic radical donor + 2 H2O. Its function is as follows. Removal of H(2)O(2), oxidation of toxic reductants, biosynthesis and degradation of lignin, suberization, auxin catabolism, response to environmental stresses such as wounding, pathogen attack and oxidative stress. These functions might be dependent on each isozyme/isoform in each plant tissue. The sequence is that of Peroxidase 3 from Capsicum annuum (Capsicum pepper).